We begin with the raw amino-acid sequence, 105 residues long: Class I hydrophobin 1 (105 aa).

Residues 1-17 (MQFTSFAILAISAVASA) form the signal peptide. Intrachain disulfides connect Cys36/Cys85, Cys44/Cys78, Cys45/Cys63, and Cys86/Cys100. N-linked (GlcNAc...) asparagine glycans are attached at residues Asn48, Asn67, and Asn97.

Belongs to the fungal hydrophobin family. Self-assembles to form functional amyloid fibrils called rodlets. Self-assembly into fibrillar rodlets occurs spontaneously at hydrophobic:hydrophilic interfaces and the rodlets further associate laterally to form amphipathic monolayers. Abundant on conidia and aerial structures formed in vitro and emerging from disease lesions on infected tomato plants.

The protein resides in the secreted. Its subcellular location is the cell wall. Functionally, aerial growth, conidiation, and dispersal of filamentous fungi in the environment rely upon a capability of their secreting small amphipathic proteins called hydrophobins (HPBs) with low sequence identity. Class I can self-assemble into an outermost layer of rodlet bundles on aerial cell surfaces, conferring cellular hydrophobicity that supports fungal growth, development and dispersal; whereas Class II form highly ordered films at water-air interfaces through intermolecular interactions but contribute nothing to the rodlet structure. Hcf-1 is a class I hydrophobin that is not necessary for the development of hyphae or conidia but acts as the main determinant of conidium hydrophobicity and, thus, is required for efficient water-mediated dispersal of conidia. Forms a component of the rodlet layer, but other hydrophobins must also participate in this proces. This Passalora fulva (Tomato leaf mold) protein is Class I hydrophobin 1.